We begin with the raw amino-acid sequence, 131 residues long: NADPH-dependent 7-cyano-7-deazaguanine reductase (131 aa).

The active-site Thioimide intermediate is the C41. Catalysis depends on D48, which acts as the Proton donor. Substrate is bound by residues 63 to 65 and 82 to 83; these read VEL and HE.

The protein belongs to the GTP cyclohydrolase I family. QueF type 1 subfamily.

Its subcellular location is the cytoplasm. The enzyme catalyses 7-aminomethyl-7-carbaguanine + 2 NADP(+) = 7-cyano-7-deazaguanine + 2 NADPH + 3 H(+). Its pathway is tRNA modification; tRNA-queuosine biosynthesis. Its function is as follows. Catalyzes the NADPH-dependent reduction of 7-cyano-7-deazaguanine (preQ0) to 7-aminomethyl-7-deazaguanine (preQ1). This Nitratiruptor sp. (strain SB155-2) protein is NADPH-dependent 7-cyano-7-deazaguanine reductase.